The following is a 451-amino-acid chain: Tapasin-related protein (451 aa).

The signal sequence occupies residues 1–20 (MGLEPSWYLLLCLAVSGAAG). Residues 21–412 (TDPPTAPTTA…RVLPNPEQRG (392 aa)) are Lumenal-facing. The region spanning 196-301 (FQVTSETQTL…TSLYQAQQIM (106 aa)) is the Ig-like V-type domain. Disulfide bonds link C217–C288 and C326–C387. Residues N270 and N277 are each glycosylated (N-linked (GlcNAc...) asparagine). The Ig-like C1-type domain occupies 302–399 (PLNILAPPKI…AHVSLEEPLT (98 aa)). A helical transmembrane segment spans residues 413-433 (TLGVIFASIIFLSALLLFLGL). Over 434 to 451 (HRQQASSSRSTRPMRHSG) the chain is Cytoplasmic.

As to quaternary structure, interacts with peptide-free HLA-A*02-B2M complexes or those loaded with low affinity peptides, likely facilitating peptide exchange onto higher affinity peptides. Interacts with MR1 in a ligand-independent way; this interaction may stabilize MR1 pool and facilitate ligand loading and dissociation. In terms of tissue distribution, widely expressed.

It is found in the cell membrane. Its subcellular location is the endoplasmic reticulum membrane. It localises to the microsome membrane. The protein localises to the golgi apparatus membrane. In terms of biological role, component of the antigen processing and presentation pathway, which binds to MHC class I coupled with beta2-microglobulin/B2M. Association between TAPBPR and MHC class I occurs in the absence of a functional peptide-loading complex (PLC). Expression seems to slow down and down-regulate MHC class I surface expression. The sequence is that of Tapasin-related protein (Tapbpl) from Mus musculus (Mouse).